We begin with the raw amino-acid sequence, 321 residues long: Fibronectin type III domain-containing protein 8 (321 aa).

Residues 175-277 (VPEVPFICEH…KPYKFATVST (103 aa)) form the Fibronectin type-III domain.

This Mus musculus (Mouse) protein is Fibronectin type III domain-containing protein 8 (Fndc8).